Reading from the N-terminus, the 152-residue chain is Endoribonuclease YbeY (152 aa).

Residues histidine 117, histidine 121, and histidine 127 each contribute to the Zn(2+) site.

Belongs to the endoribonuclease YbeY family. Zn(2+) is required as a cofactor.

The protein resides in the cytoplasm. Single strand-specific metallo-endoribonuclease involved in late-stage 70S ribosome quality control and in maturation of the 3' terminus of the 16S rRNA. This Borreliella afzelii (strain PKo) (Borrelia afzelii) protein is Endoribonuclease YbeY.